The chain runs to 948 residues: MDKSSTMLVHYDKGTPAVANEIKEALEGNDVEAKVDAMKKAIMLLLNGETIPQLFITIIRYVLPSEDHTIQKLLLLYLELIEKTDSKGKVLPEMILICQNLRNNLQHPNEYIRGVTLRFLCRMKETEIVEPLTPSVLQNLEHRHPFVRRNAILAIMSIYKLPHGDQLFVDAPEMIEKVLSTEQDPSAKRNAFLMLFTCAEERAVNYLLSNVDKVSDWNESLQMVVLELIRSVCKTKPAEKGKYIKIIISLLSATSSAVIYECAGTLVSLSSAPTAIRAAANTYCQLLLSQSDNNVKLILLDRLYELKTLHRDIMVELIIDVLRALSSPNLDIRRKTLDIALDLITHHNINEVVQMLKKEVVKTQSGELEKNGEYRQMLIQAIHACAVKFPEVASTVVHLLMDFLGDSNVASALDVVVFVREIIETNPKLRVSIITRLLDTFYQIRAGKVCPCALWIIGEYCLSLSEVESGISTITQCLGELPFYSVSEESEPTETSKKIQPTSSAMVSSRKPVILADGTYATQSAASETTFSSPTVVQGSLTSGNLRALLLTGDFFLGAVVACTLTKLVLRLEEVQSSKTEVNKTVSQALLIMVSILQLGQSPVSPHPIDNDSYERIMLCIKLLCHRNVEMKKIWLESCRQSFVKMISEKQLREMEELKAKTQTTHAQPDDLIDFFHLKSRKGMSQLELEDQVQDDLKRATGEFTKDENDANKLNRILQLTGFSDPVYAEAYVTVHHYDIALEVTVINRTKETLQNLCLELATMGDLKLVERPQNYSLAPERSMQIKANIKVSSTETGVIFGNIVYETSNVMERNVVVLNDIHIDIMDYISPAVCSEVAFRTMWAEFEWENKVAVNTTIQNEREFLDHIIKSTNMKCLTAPSAIAGECGFLAANLYAKSVFGEDALVNLSIEKQTDGTLSGYIRIRSKTQGIALSLGDKITLKQKGGS.

HEAT repeat units follow at residues 49–87, 92–126, 127–164, 274–311, 312–349, and 391–428; these read ETIP…TDSK, PEMI…MKET, EIVE…LPHG, TAIR…TLHR, DIMV…HHNI, and EVAS…TNPK.

Oligomeric complex that consists of at least the alpha, beta, beta', gamma, delta, epsilon and zeta subunits.

The protein localises to the cytoplasm. It is found in the golgi apparatus membrane. The protein resides in the cytoplasmic vesicle. Its subcellular location is the COPI-coated vesicle membrane. In terms of biological role, the coatomer is a cytosolic protein complex that binds to dilysine motifs and reversibly associates with Golgi non-clathrin-coated vesicles, which further mediate biosynthetic protein transport from the ER, via the Golgi up to the trans Golgi network. Coatomer complex is required for budding from Golgi membranes, and is essential for the retrograde Golgi-to-ER transport of dilysine-tagged proteins. The chain is Coatomer subunit beta-2 from Arabidopsis thaliana (Mouse-ear cress).